Here is a 152-residue protein sequence, read N- to C-terminus: MDEKEIQRLVEEVSLQYFGMPFLHKVKFNSRLRTTGGRYLLKSHNVELNYRYYEMYGKEELIGIIKHELCHYHLHITGRGYKHRDRDFRELLKKVDAPRFCKRMINEEKEKKIYKYECMECLLQYVRRRQINTKRYVCGKCKGKLKPISKTS.

In terms of domain architecture, SprT-like spans 7–147 (QRLVEEVSLQ…CGKCKGKLKP (141 aa)). His-67 is a binding site for Zn(2+). Glu-68 is a catalytic residue. Zn(2+) is bound at residue His-71.

It belongs to the SprT family. It depends on Zn(2+) as a cofactor.

It is found in the cytoplasm. The polypeptide is Protein SprT-like (Bacillus cereus (strain G9842)).